The chain runs to 392 residues: Tryptophan synthase beta chain 1 (392 aa).

Position 85 is an N6-(pyridoxal phosphate)lysine (Lys85).

The protein belongs to the TrpB family. Tetramer of two alpha and two beta chains. Pyridoxal 5'-phosphate is required as a cofactor.

The catalysed reaction is (1S,2R)-1-C-(indol-3-yl)glycerol 3-phosphate + L-serine = D-glyceraldehyde 3-phosphate + L-tryptophan + H2O. The protein operates within amino-acid biosynthesis; L-tryptophan biosynthesis; L-tryptophan from chorismate: step 5/5. Its function is as follows. The beta subunit is responsible for the synthesis of L-tryptophan from indole and L-serine. The sequence is that of Tryptophan synthase beta chain 1 (trpB1) from Methanothermobacter thermautotrophicus (strain ATCC 29096 / DSM 1053 / JCM 10044 / NBRC 100330 / Delta H) (Methanobacterium thermoautotrophicum).